The sequence spans 321 residues: Phospho-N-acetylmuramoyl-pentapeptide-transferase (321 aa).

Helical transmembrane passes span 6–26, 53–73, 77–97, 121–141, 144–164, 175–195, 200–220, 226–246, 251–271, and 301–321; these read MLIP…LFIG, TMGG…VGIW, LTLS…LGFY, ILGA…HTLW, IIGN…WLVG, LDGL…IIAA, TDVL…LMFN, IFMG…VAIL, WSLL…ILQV, and IDLT…AFFL.

Belongs to the glycosyltransferase 4 family. MraY subfamily. Requires Mg(2+) as cofactor.

It localises to the cell membrane. It catalyses the reaction UDP-N-acetyl-alpha-D-muramoyl-L-alanyl-gamma-D-glutamyl-L-lysyl-D-alanyl-D-alanine + di-trans,octa-cis-undecaprenyl phosphate = Mur2Ac(oyl-L-Ala-gamma-D-Glu-L-Lys-D-Ala-D-Ala)-di-trans,octa-cis-undecaprenyl diphosphate + UMP. It functions in the pathway cell wall biogenesis; peptidoglycan biosynthesis. Its function is as follows. Catalyzes the initial step of the lipid cycle reactions in the biosynthesis of the cell wall peptidoglycan: transfers peptidoglycan precursor phospho-MurNAc-pentapeptide from UDP-MurNAc-pentapeptide onto the lipid carrier undecaprenyl phosphate, yielding undecaprenyl-pyrophosphoryl-MurNAc-pentapeptide, known as lipid I. This chain is Phospho-N-acetylmuramoyl-pentapeptide-transferase, found in Lacticaseibacillus paracasei (strain ATCC 334 / BCRC 17002 / CCUG 31169 / CIP 107868 / KCTC 3260 / NRRL B-441) (Lactobacillus paracasei).